A 375-amino-acid chain; its full sequence is uncharacterized protein (375 aa).

Topologically, residues 1 to 2 (MR) are cytoplasmic. Residues 3–23 (WYSYVIPAVILSIIAISGVWW) traverse the membrane as a helical; Signal-anchor for type II membrane protein segment. Topologically, residues 24-375 (NATLGTRLDQ…YIEQRLFPQP (352 aa)) are lumenal.

It belongs to the glycosyltransferase 34 family.

Its subcellular location is the endoplasmic reticulum membrane. It localises to the golgi apparatus membrane. This is an uncharacterized protein from Schizosaccharomyces pombe (strain 972 / ATCC 24843) (Fission yeast).